Reading from the N-terminus, the 298-residue chain is Protease HtpX homolog (298 aa).

2 consecutive transmembrane segments (helical) span residues 14 to 34 (VVLL…AGYL) and 39 to 59 (YAMG…SMIF). Residue H143 participates in Zn(2+) binding. The active site involves E144. H147 is a binding site for Zn(2+). The next 2 helical transmembrane spans lie at 158–178 (IAVA…RMLW) and 197–217 (IITL…ASLI). E226 lines the Zn(2+) pocket.

Belongs to the peptidase M48B family. Requires Zn(2+) as cofactor.

The protein localises to the cell membrane. This is Protease HtpX homolog from Streptococcus pyogenes serotype M28 (strain MGAS6180).